Consider the following 547-residue polypeptide: Probable FMN/FAD exporter YeeO (547 aa).

11 helical membrane-spanning segments follow: residues 94–114, 139–159, 174–194, 211–231, 246–268, 281–301, 318–338, 350–370, 404–424, 439–459, and 486–506; these read ITPLAVPIFMENACVLLMGVL, VIMAFFAAIDLGTTVVVAFSL, SLVIMTLFAVLLATLIHHFGE, LALTYLELTVLSYPAAAITLI, LLINGSLNILNIIISGILIYGLF, GLTISRYIGAVAILWVLAIGF, FSIIWEVMGIGIPASVESVLF, AGMGTSVIAGNFIAFSIAALI, VFWLSTLGLTAIAWLTAPFAG, VVVILIWLNALFMPIWSASWV, and VVVGYVLGIMLGWGVVGVWMG.

The protein belongs to the multi antimicrobial extrusion (MATE) (TC 2.A.66.1) family.

It localises to the cell inner membrane. In terms of biological role, a transporter able to export peptides and flavins. When overexpressed allows cells deleted for multiple peptidases (pepA, pepB, pepD and pepN) to grow in the presence of dipeptides Ala-Gln or Gly-Tyr which otherwise inhibit growth. Cells overexpressing this protein have decreased intracellular levels of Ala-Gln dipeptide, and in a system that produces the Ala-Gln dipeptide, overproduction of this protein increases its export. When overexpressed increases secretion of FMN and FAD but not riboflavin; intracellular concentrations of FMN and riboflavin rise, possibly to compensate for increased secretion. Increased overexpression causes slight cell elongation. This Escherichia coli (strain K12) protein is Probable FMN/FAD exporter YeeO (yeeO).